Reading from the N-terminus, the 396-residue chain is Ribosomal RNA large subunit methyltransferase I (396 aa).

The 78-residue stretch at 2-79 folds into the PUA domain; sequence AIRIKLKPGR…REEEIDRAFF (78 aa).

The protein belongs to the methyltransferase superfamily. RlmI family.

It localises to the cytoplasm. The catalysed reaction is cytidine(1962) in 23S rRNA + S-adenosyl-L-methionine = 5-methylcytidine(1962) in 23S rRNA + S-adenosyl-L-homocysteine + H(+). Functionally, specifically methylates the cytosine at position 1962 (m5C1962) of 23S rRNA. The polypeptide is Ribosomal RNA large subunit methyltransferase I (Shewanella putrefaciens (strain CN-32 / ATCC BAA-453)).